The chain runs to 122 residues: Large ribosomal subunit protein uL14 (122 aa).

It belongs to the universal ribosomal protein uL14 family. Part of the 50S ribosomal subunit. Forms a cluster with proteins L3 and L19. In the 70S ribosome, L14 and L19 interact and together make contacts with the 16S rRNA in bridges B5 and B8.

In terms of biological role, binds to 23S rRNA. Forms part of two intersubunit bridges in the 70S ribosome. This chain is Large ribosomal subunit protein uL14, found in Bradyrhizobium sp. (strain BTAi1 / ATCC BAA-1182).